Reading from the N-terminus, the 170-residue chain is Ubiquitin-conjugating enzyme E2 J2-like (170 aa).

Residues 15-165 (DCITRLKREF…NKTFCELFPY (151 aa)) enclose the UBC core domain. Residue cysteine 97 is the Glycyl thioester intermediate of the active site.

The protein belongs to the ubiquitin-conjugating enzyme family.

It catalyses the reaction S-ubiquitinyl-[E1 ubiquitin-activating enzyme]-L-cysteine + [E2 ubiquitin-conjugating enzyme]-L-cysteine = [E1 ubiquitin-activating enzyme]-L-cysteine + S-ubiquitinyl-[E2 ubiquitin-conjugating enzyme]-L-cysteine.. Its pathway is protein modification; protein ubiquitination. Catalyzes the covalent attachment of ubiquitin to other proteins. The sequence is that of Ubiquitin-conjugating enzyme E2 J2-like from Dictyostelium discoideum (Social amoeba).